A 318-amino-acid polypeptide reads, in one-letter code: Homeobox-leucine zipper protein ATHB-4 (318 aa).

Disordered regions lie at residues 1 to 23 (MGERDDGLGLSLSLGNSQQKEPS) and 128 to 165 (ARGGDENEAERASCSRGGGSGGSDDEDGGNGDGSRKKL). Over residues 8–17 (LGLSLSLGNS) the composition is skewed to low complexity. A compositionally biased stretch (basic and acidic residues) spans 128–140 (ARGGDENEAERAS). A DNA-binding region (homeobox) is located at residues 160–219 (GSRKKLRLSKDQALVLEETFKEHSTLNPKQKLALAKQLNLRARQVEVWFQNRRARTKLKQ). The leucine-zipper stretch occupies residues 227 to 248 (LKRCCDNLTEENRRLQKEVSEL).

This sequence belongs to the HD-ZIP homeobox family. Class II subfamily.

The protein localises to the nucleus. Probable transcription factor. This is Homeobox-leucine zipper protein ATHB-4 (ATHB-4) from Arabidopsis thaliana (Mouse-ear cress).